The following is a 142-amino-acid chain: Lutropin subunit beta (142 aa).

An N-terminal signal peptide occupies residues 1–21; it reads MEMLQGLLLLWLLLNVGGVWT. 6 disulfides stabilise this stretch: Cys30-Cys78, Cys44-Cys93, Cys47-Cys131, Cys55-Cys109, Cys59-Cys111, and Cys114-Cys121. Asn34 carries an N-linked (GlcNAc...) asparagine glycan.

It belongs to the glycoprotein hormones subunit beta family. Heterodimer of a common alpha chain and a unique beta chain which confers biological specificity to thyrotropin, lutropin, follitropin and gonadotropin.

The protein resides in the secreted. Its function is as follows. Promotes spermatogenesis and ovulation by stimulating the testes and ovaries to synthesize steroids. This is Lutropin subunit beta (LHB) from Panthera tigris altaica (Siberian tiger).